We begin with the raw amino-acid sequence, 1094 residues long: Probable arabinosyltransferase C (1094 aa).

13 consecutive transmembrane segments (helical) span residues 28 to 50, 232 to 251, 264 to 286, 341 to 360, 373 to 392, 431 to 453, 466 to 488, 530 to 552, 565 to 582, 586 to 608, 620 to 642, 657 to 679, and 700 to 722; these read IARYVAVVAGLLGAVLAIATPLL, AAMILGVALTGAALVALHIL, PARWWSIGGLDTLVIAVLVWWHF, SIWMRLPTLAMALTCWWVIS, TSRAAAWTAAGMFLAVWLPL, IGALTLFSGPTGIASIGALLVAI, RFGVLPLVAPILAAATVTAIPIF, SIARRFAVLALVLALAVSVAMSL, SRRIIGITIISFLAMMFT, WTHHFGVFAGLAGSLGALAAVAV, TVFAAVVVFVLALSFASVNGWWY, WRWSLTTALLELTVLVLLLAAWF, and LAGIVQSPLAIATWLLVLFEVVS. Residues 817-831 are compositionally biased toward low complexity; sequence GSEPGTEGGTTAAPG. The segment at 817–836 is disordered; it reads GSEPGTEGGTTAAPGINGSR.

This sequence belongs to the emb family.

It is found in the cell membrane. Functionally, arabinosyl transferase responsible for the polymerization of arabinose into the arabinan of arabinogalactan. This Mycobacterium bovis (strain ATCC BAA-935 / AF2122/97) protein is Probable arabinosyltransferase C (embC).